The sequence spans 172 residues: L-amino acid N-acyltransferase MnaT (172 aa).

One can recognise an N-acetyltransferase domain in the interval 1 to 163 (MSIRFARKAD…DLTFMQLQLD (163 aa)). Residues 85 to 87 (VYV), 93 to 98 (GKGLGR), Asn124, and Ser133 contribute to the acetyl-CoA site.

Belongs to the acetyltransferase family. PAT/BAR subfamily.

The catalysed reaction is L-methionine + acetyl-CoA = N-acetyl-L-methionine + CoA + H(+). The enzyme catalyses propanoyl-CoA + L-methionine = N-propanoyl-L-methioninate + CoA + H(+). It catalyses the reaction L-alpha-phenylglycine + acetyl-CoA = N-acetyl-L-alpha-phenylglycine + CoA + H(+). It carries out the reaction L-methionine sulfoximine + acetyl-CoA = N-acetyl-L-methionine sulfoximine + CoA + H(+). The catalysed reaction is L-methionine sulfone + acetyl-CoA = N-acetyl-L-methionine sulfone + CoA + H(+). In terms of biological role, acyltransferase that appears to be required for E.coli optimal growth rate and yield via the formation of N-acetylated amino acids. Catalyzes the acylation of L-methionine using acetyl-CoA or propanoyl-CoA as acyl donors, and the acetylation of L-phenylglycine. Is also able to N-acylate other free L-amino acids and their derivatives using a CoA thioester as cosubstrate. Using acetyl-CoA as an acyl donor, substrate specificity is methionine sulfone &gt; methionine sulfoximine &gt; methionine sulfoxide &gt; methionine. Asparagine, lysine, glutamine, aspartate and glutamate are very poor substrates. Using methionine as a substrate, acyl donor preference is propanoyl-CoA &gt; acetyl-CoA &gt;&gt; butyryl-CoA. Likely plays a role in the resistance against the toxic effects of L-methionine sulfoximine (MSX), via its ability to catalyze its acetylation; MSX is a rare amino acid which inhibits glutamine synthetase (GlnA). The polypeptide is L-amino acid N-acyltransferase MnaT (Escherichia coli (strain K12)).